The primary structure comprises 435 residues: CUB and peptidase domain-containing protein 1 (435 aa).

Residues 1–16 form the signal peptide; the sequence is SGFHLSFSFFRRAVCG. In terms of domain architecture, Peptidase S1 spans 25–261; it reads IVGGTVAPIN…LKSWITGKIS (237 aa). Residues cysteine 50 and cysteine 66 are joined by a disulfide bond. Catalysis depends on charge relay system residues histidine 65 and aspartate 116. 4 disulfide bridges follow: cysteine 151/cysteine 218, cysteine 182/cysteine 197, cysteine 208/cysteine 237, and cysteine 322/cysteine 341. The active-site Charge relay system is the serine 212. Positions 256–378 constitute a CUB domain; that stretch reads ITGKISRSPA…SGFHLSFSFF (123 aa).

Belongs to the peptidase S1 family. In terms of tissue distribution, component of the acid-insoluble organic matrix of the aragonitic skeleton (at protein level).

The protein localises to the secreted. The protein is CUB and peptidase domain-containing protein 1 of Acropora millepora (Staghorn coral).